The primary structure comprises 409 residues: Broad specificity amino-acid racemase (409 aa).

Residues 1-24 (MPFRRTLLAASLALLITGQAPLYA) form the signal peptide. Cysteines 71 and 97 form a disulfide. Residue K75 is the Proton acceptor of the active site. K75 carries the N6-(pyridoxal phosphate)lysine modification. R174 contacts substrate. The Proton acceptor role is filled by Y301. Residue M349 coordinates substrate.

This sequence belongs to the alanine racemase family. Bsr subfamily. It depends on pyridoxal 5'-phosphate as a cofactor.

It is found in the periplasm. It carries out the reaction an L-alpha-amino acid = a D-alpha-amino acid. The catalysed reaction is L-lysine = D-lysine. The enzyme catalyses L-arginine = D-arginine. It catalyses the reaction L-glutamine = D-glutamine. In terms of biological role, amino-acid racemase able to utilize a broad range of substrates. Reversibly racemizes 9 of the 19 natural chiral amino acids known, including both positively charged amino acids (Lys, Arg and His) and non-beta-branched aliphatic amino acids (Ala, Leu, Met, Ser, Gln and Asn). Among these amino acids, activity is the highest with lysine and arginine, and poor or very poor with the others. Plays a primary role in the catabolism of basic amino acid, that allows P.putida strain KT2440 to grow on L-Lys and L-Arg as the sole source of carbon and nitrogen, through conversion to their respective D-enantiomers. This is Broad specificity amino-acid racemase from Pseudomonas putida (strain ATCC 47054 / DSM 6125 / CFBP 8728 / NCIMB 11950 / KT2440).